We begin with the raw amino-acid sequence, 423 residues long: Putative competence-damage inducible protein (423 aa).

This sequence belongs to the CinA family.

The sequence is that of Putative competence-damage inducible protein from Streptococcus pyogenes serotype M4 (strain MGAS10750).